The chain runs to 153 residues: Large ribosomal subunit protein uL13 (153 aa).

Belongs to the universal ribosomal protein uL13 family. As to quaternary structure, part of the 50S ribosomal subunit.

In terms of biological role, this protein is one of the early assembly proteins of the 50S ribosomal subunit, although it is not seen to bind rRNA by itself. It is important during the early stages of 50S assembly. This is Large ribosomal subunit protein uL13 from Methylobacterium nodulans (strain LMG 21967 / CNCM I-2342 / ORS 2060).